Consider the following 284-residue polypeptide: Pantothenate synthetase (284 aa).

30–37 contributes to the ATP binding site; sequence MGALHEGH. Histidine 37 acts as the Proton donor in catalysis. Glutamine 61 lines the (R)-pantoate pocket. Position 61 (glutamine 61) interacts with beta-alanine. 147 to 150 contributes to the ATP binding site; sequence GEKD. Glutamine 153 lines the (R)-pantoate pocket. Residues valine 176 and 184–187 each bind ATP; that span reads TSSR.

Belongs to the pantothenate synthetase family. Homodimer.

It is found in the cytoplasm. It carries out the reaction (R)-pantoate + beta-alanine + ATP = (R)-pantothenate + AMP + diphosphate + H(+). The protein operates within cofactor biosynthesis; (R)-pantothenate biosynthesis; (R)-pantothenate from (R)-pantoate and beta-alanine: step 1/1. In terms of biological role, catalyzes the condensation of pantoate with beta-alanine in an ATP-dependent reaction via a pantoyl-adenylate intermediate. In Chlorobaculum tepidum (strain ATCC 49652 / DSM 12025 / NBRC 103806 / TLS) (Chlorobium tepidum), this protein is Pantothenate synthetase.